The primary structure comprises 1461 residues: A disintegrin and metalloproteinase with thrombospondin motifs adt-1 (1461 aa).

The N-terminal stretch at 1-21 (MPPFYIVITFLLSTVFRISQS) is a signal peptide. A propeptide spanning residues 22–163 (VHHHLNEEEL…HLQKERHLVY (142 aa)) is cleaved from the precursor. N69 is a glycosylation site (N-linked (GlcNAc...) asparagine). The Cysteine switch motif lies at 190-197 (SFCDTSEQ). N-linked (GlcNAc...) asparagine glycosylation occurs at N212. The 203-residue stretch at 233–435 (ITLEIGLFLD…CSVREFNAFL (203 aa)) folds into the Peptidase M12B domain. Zn(2+) is bound at residue H388. The active site involves E389. Zn(2+) is bound by residues H392 and H398. A disulfide bridge connects residues C405 and C410. A Disintegrin domain is found at 464–546 (RLPGQRFTAD…TFGLTPVPID (83 aa)). TSP type-1 domains are found at residues 708 to 759 (HQWE…RDCE), 761 to 802 (FGEW…RPCD), 804 to 852 (EGCW…QKCI), 853 to 898 (SQSW…QQCP), 903 to 952 (LSVW…GPCE), 955 to 1000 (YLTW…IACL), 1035 to 1083 (SIHS…NSCL), 1087 to 1133 (IWSD…PSCS), 1148 to 1200 (APRW…GSCS), 1203 to 1260 (AGGW…NVCS), 1265 to 1321 (DGGW…ARCH), 1324 to 1378 (DGGW…PACD), and 1382 to 1435 (DGEW…RQSP). 3 disulfides stabilise this stretch: C719–C751, C723–C758, and C735–C741. Intrachain disulfides connect C816–C846, C820–C851, C831–C836, C862–C892, C866–C897, and C877–C882. Disulfide bonds link C1047-C1077, C1051-C1082, and C1062-C1067. Intrachain disulfides connect C1160-C1194, C1162-C1199, C1173-C1184, C1215-C1253, C1219-C1259, C1231-C1243, C1277-C1314, C1281-C1320, C1292-C1304, C1336-C1372, C1340-C1377, and C1351-C1362.

Zn(2+) is required as a cofactor. In hermaphrodites, expressed in the vulva, head ganglia, ventral nerve cord and amphid neurons. Expressed in the rays of the male tail.

It localises to the secreted. Functionally, plays a role in ray morphogenesis in the male tail, probably by remodeling the extracellular matrix (ECM) in the cuticle. The polypeptide is A disintegrin and metalloproteinase with thrombospondin motifs adt-1 (Caenorhabditis elegans).